A 562-amino-acid chain; its full sequence is NAD-dependent malic enzyme (562 aa).

Tyrosine 101 functions as the Proton donor in the catalytic mechanism. Arginine 154 is an NAD(+) binding site. The active-site Proton acceptor is the lysine 172. A divalent metal cation contacts are provided by glutamate 243, aspartate 244, and aspartate 267. Aspartate 267 and asparagine 415 together coordinate NAD(+).

It belongs to the malic enzymes family. Homotetramer. Mg(2+) is required as a cofactor. Requires Mn(2+) as cofactor.

The catalysed reaction is (S)-malate + NAD(+) = pyruvate + CO2 + NADH. It carries out the reaction oxaloacetate + H(+) = pyruvate + CO2. The sequence is that of NAD-dependent malic enzyme from Shewanella oneidensis (strain ATCC 700550 / JCM 31522 / CIP 106686 / LMG 19005 / NCIMB 14063 / MR-1).